The following is a 100-amino-acid chain: Small ribosomal subunit protein uS14c (100 aa).

It belongs to the universal ribosomal protein uS14 family. As to quaternary structure, part of the 30S ribosomal subunit.

The protein resides in the plastid. It is found in the chloroplast. Binds 16S rRNA, required for the assembly of 30S particles. The polypeptide is Small ribosomal subunit protein uS14c (Pelargonium hortorum (Common geranium)).